The primary structure comprises 382 residues: Flap endonuclease 1 (382 aa).

An N-domain region spans residues Met1–Arg104. Position 34 (Asp34) interacts with Mg(2+). DNA-binding residues include Arg47 and Arg70. Asp86 lines the Mg(2+) pocket. The tract at residues Gly95–Gly118 is disordered. A compositionally biased stretch (basic and acidic residues) spans Glu96–Thr115. The segment at Asp122–Tyr253 is I-domain. The Mg(2+) site is built by Glu158, Glu160, Asp179, and Asp181. Glu158 provides a ligand contact to DNA. Positions 231 and 233 each coordinate DNA. Asp233 serves as a coordination point for Mg(2+). Residues Thr336 to Phe344 are interaction with PCNA. Positions Thr353–Lys382 are disordered. The segment covering Asn364–Asn375 has biased composition (polar residues).

The protein belongs to the XPG/RAD2 endonuclease family. FEN1 subfamily. As to quaternary structure, interacts with PCNA. Three molecules of FEN1 bind to one PCNA trimer with each molecule binding to one PCNA monomer. PCNA stimulates the nuclease activity without altering cleavage specificity. Requires Mg(2+) as cofactor. Post-translationally, phosphorylated. Phosphorylation upon DNA damage induces relocalization to the nuclear plasma.

The protein resides in the nucleus. It is found in the nucleolus. The protein localises to the nucleoplasm. Its subcellular location is the mitochondrion. In terms of biological role, structure-specific nuclease with 5'-flap endonuclease and 5'-3' exonuclease activities involved in DNA replication and repair. During DNA replication, cleaves the 5'-overhanging flap structure that is generated by displacement synthesis when DNA polymerase encounters the 5'-end of a downstream Okazaki fragment. It enters the flap from the 5'-end and then tracks to cleave the flap base, leaving a nick for ligation. Also involved in the long patch base excision repair (LP-BER) pathway, by cleaving within the apurinic/apyrimidinic (AP) site-terminated flap. Acts as a genome stabilization factor that prevents flaps from equilibrating into structures that lead to duplications and deletions. Also possesses 5'-3' exonuclease activity on nicked or gapped double-stranded DNA, and exhibits RNase H activity. Also involved in replication and repair of rDNA and in repairing mitochondrial DNA. This chain is Flap endonuclease 1, found in Glossina morsitans morsitans (Savannah tsetse fly).